Reading from the N-terminus, the 455-residue chain is Bifunctional protein GlmU (455 aa).

Positions M1–R226 are pyrophosphorylase. UDP-N-acetyl-alpha-D-glucosamine-binding positions include L8–G11, K22, Q73, G78–T79, Y99–D101, G136, E151, N166, and N224. Residue D101 coordinates Mg(2+). N224 serves as a coordination point for Mg(2+). Positions R227 to Q247 are linker. The segment at G248 to S455 is N-acetyltransferase. Positions 330 and 348 each coordinate UDP-N-acetyl-alpha-D-glucosamine. H360 functions as the Proton acceptor in the catalytic mechanism. UDP-N-acetyl-alpha-D-glucosamine is bound by residues Y363 and N374. Residues A377, N383–Y384, S402, A420, and R437 contribute to the acetyl-CoA site.

In the N-terminal section; belongs to the N-acetylglucosamine-1-phosphate uridyltransferase family. This sequence in the C-terminal section; belongs to the transferase hexapeptide repeat family. Homotrimer. Mg(2+) serves as cofactor.

The protein resides in the cytoplasm. The enzyme catalyses alpha-D-glucosamine 1-phosphate + acetyl-CoA = N-acetyl-alpha-D-glucosamine 1-phosphate + CoA + H(+). The catalysed reaction is N-acetyl-alpha-D-glucosamine 1-phosphate + UTP + H(+) = UDP-N-acetyl-alpha-D-glucosamine + diphosphate. The protein operates within nucleotide-sugar biosynthesis; UDP-N-acetyl-alpha-D-glucosamine biosynthesis; N-acetyl-alpha-D-glucosamine 1-phosphate from alpha-D-glucosamine 6-phosphate (route II): step 2/2. It participates in nucleotide-sugar biosynthesis; UDP-N-acetyl-alpha-D-glucosamine biosynthesis; UDP-N-acetyl-alpha-D-glucosamine from N-acetyl-alpha-D-glucosamine 1-phosphate: step 1/1. It functions in the pathway bacterial outer membrane biogenesis; LPS lipid A biosynthesis. Functionally, catalyzes the last two sequential reactions in the de novo biosynthetic pathway for UDP-N-acetylglucosamine (UDP-GlcNAc). The C-terminal domain catalyzes the transfer of acetyl group from acetyl coenzyme A to glucosamine-1-phosphate (GlcN-1-P) to produce N-acetylglucosamine-1-phosphate (GlcNAc-1-P), which is converted into UDP-GlcNAc by the transfer of uridine 5-monophosphate (from uridine 5-triphosphate), a reaction catalyzed by the N-terminal domain. The chain is Bifunctional protein GlmU from Pseudomonas putida (strain GB-1).